The following is a 56-amino-acid chain: Ribosome modulation factor (56 aa).

This sequence belongs to the ribosome modulation factor family.

Its subcellular location is the cytoplasm. In terms of biological role, during stationary phase, converts 70S ribosomes to an inactive dimeric form (100S ribosomes). The polypeptide is Ribosome modulation factor (Proteus mirabilis (strain HI4320)).